The sequence spans 293 residues: Ribosomal protein L11 methyltransferase (293 aa).

The S-adenosyl-L-methionine site is built by threonine 145, glycine 166, aspartate 188, and asparagine 230.

The protein belongs to the methyltransferase superfamily. PrmA family.

The protein resides in the cytoplasm. It carries out the reaction L-lysyl-[protein] + 3 S-adenosyl-L-methionine = N(6),N(6),N(6)-trimethyl-L-lysyl-[protein] + 3 S-adenosyl-L-homocysteine + 3 H(+). Functionally, methylates ribosomal protein L11. The chain is Ribosomal protein L11 methyltransferase from Escherichia coli O7:K1 (strain IAI39 / ExPEC).